Consider the following 256-residue polypeptide: uncharacterized protein (256 aa).

A signal peptide spans 1–23 (MKRLNKLVLGIIFLFLVISITAG). Residue cysteine 24 is the site of N-palmitoyl cysteine attachment. A lipid anchor (S-diacylglycerol cysteine) is attached at cysteine 24.

Belongs to the staphylococcal tandem lipoprotein family.

The protein resides in the cell membrane. This is an uncharacterized protein from Staphylococcus aureus (strain COL).